The primary structure comprises 207 residues: Gene 66 protein (207 aa).

The polypeptide is Gene 66 protein (66) (Mycobacterium (Mycobacteriophage L5)).